A 465-amino-acid polypeptide reads, in one-letter code: MTIHIYNTLTRQKEEFIPLEENKVKMYVCGPTVYNYIHIGNARPPMVFDTVRRYLEYKGYDVQYVSNFTDVDDKLIKAANELGEDVPTIADRFVEAYFEDVTALGCKHATVHPRVTENMDIIIEFIHELVNKGYAYESEGDVYFRTKEFEGYGKLSHQPIADLRHGARIEVGEKKQDPLDFALWKAAKEGEIFWESPWGQGRPGWHIECSAMARKYLGDTIDIHAGGQDLAFPHHENEIAQSEALTGKTFARYWMHNGYININNEKMSKSLGNFILVHDIIKQYDPQLIRFFMLSVHYRHPINFSEELLQSTNNGLERIKTAYGNLKHRMESSTDLTDHNEKWLADLEKFQTAFEEAMNDDFNTANAITELYNVANHANQYLLEEHTSTVVIEAYVKQLETLFDILGLELAQEELLDEEIEALIQKRIEARKNRDFALSDQIRDDLKDRNIILEDTAQGTRWKRG.

Cys29 lines the Zn(2+) pocket. Positions Pro31–Asn41 match the 'HIGH' region motif. Zn(2+)-binding residues include Cys209, His234, and Glu238. The short motif at Lys266–Ser270 is the 'KMSKS' region element. Lys269 contributes to the ATP binding site. Ser270 is modified (phosphoserine).

Belongs to the class-I aminoacyl-tRNA synthetase family. Monomer. Zn(2+) is required as a cofactor.

The protein localises to the cytoplasm. It carries out the reaction tRNA(Cys) + L-cysteine + ATP = L-cysteinyl-tRNA(Cys) + AMP + diphosphate. This chain is Cysteine--tRNA ligase, found in Bacillus thuringiensis (strain Al Hakam).